We begin with the raw amino-acid sequence, 180 residues long: Prorelaxin (180 aa).

An N-terminal signal peptide occupies residues 1 to 25; it reads MLRLFLSHLLGVWLLLSLRARKIPA. 3 disulfide bridges follow: C33–C167, C45–C180, and C166–C171. Positions 53 to 154 are cleaved as a propeptide — connecting peptide; that stretch reads SSQQHREPRQ…RSRLDAHSRI (102 aa).

This sequence belongs to the insulin family. Heterodimer of a B chain and an A chain linked by two disulfide bonds. In terms of tissue distribution, expressed by the placenta. Exclusively detected in cells located in the lamellar placental labyrinth and absent from other placental and non-placental uterine parts.

The protein resides in the secreted. Functionally, relaxin is an ovarian hormone that acts with estrogen to produce dilatation of the birth canal in many mammals. This Felis catus (Cat) protein is Prorelaxin (RLN).